The following is a 425-amino-acid chain: Ribulose bisphosphate carboxylase/oxygenase activase B, chloroplastic (425 aa).

A chloroplast-targeting transit peptide spans 1–43 (MASAFSSTVGAPASTPTIFLGKKVKNYYHGGNKMKSRVVRVMA). ATP is bound at residue 153-160 (GGKGQGKS).

Belongs to the RuBisCO activase family.

The protein resides in the plastid. It is found in the chloroplast stroma. In terms of biological role, activation of RuBisCO (ribulose-1,5-bisphosphate carboxylase/oxygenase; EC 4.1.1.39) involves the ATP-dependent carboxylation of the epsilon-amino group of lysine leading to a carbamate structure. The protein is Ribulose bisphosphate carboxylase/oxygenase activase B, chloroplastic (RCAB) of Hordeum vulgare (Barley).